Consider the following 191-residue polypeptide: ATP-dependent Clp protease proteolytic subunit 1 (191 aa).

The active-site Nucleophile is the Ser-91. His-116 is a catalytic residue.

Belongs to the peptidase S14 family. Fourteen ClpP subunits assemble into 2 heptameric rings which stack back to back to give a disk-like structure with a central cavity, resembling the structure of eukaryotic proteasomes.

It localises to the cytoplasm. It catalyses the reaction Hydrolysis of proteins to small peptides in the presence of ATP and magnesium. alpha-casein is the usual test substrate. In the absence of ATP, only oligopeptides shorter than five residues are hydrolyzed (such as succinyl-Leu-Tyr-|-NHMec, and Leu-Tyr-Leu-|-Tyr-Trp, in which cleavage of the -Tyr-|-Leu- and -Tyr-|-Trp bonds also occurs).. Its function is as follows. Cleaves peptides in various proteins in a process that requires ATP hydrolysis. Has a chymotrypsin-like activity. Plays a major role in the degradation of misfolded proteins. In Chlamydia pneumoniae (Chlamydophila pneumoniae), this protein is ATP-dependent Clp protease proteolytic subunit 1.